The primary structure comprises 498 residues: MRRAPSLVLFFLVALCGRGNCRVANAEEKLMDDLLNKTRYNNLIRPATSSSQLISIKLQLSLAQLISVNEREQIMTTNVWLKQEWTDYRLTWNSSRYEGVNILRIPAKRIWLPDIVLYNNADGTYEVSVYTNLIVRSNGSVLWLPPAIYKSACKIEVKYFPFDQQNCTLKFRSWTYDHTEIDMVLMTPTASMDDFTPSGEWDIVALPGRRTVNPQDPSYVDVTYDFIIKRKPLFYTINLIIPCVLTTLLAILVFYLPSDCGEKMTLCISVLLALTFFLLLISKIVPPTSLDVPLIGKYLMFTMVLVTFSIVTSVCVLNVHHRSPSTHTMAPWVKRCFLHKLPTFLFMKRPGPDSSPARAFPPSKSCVTKPEATATSTSPSNFYGNSMYFVNPASAASKSPAGSTPVAIPRDFWLRSSGRFRQDVQEALEGVSFIAQHMKNDDEDQSVVEDWKYVAMVVDRLFLWVFMFVCVLGTVGLFLPPLFQTHAASEGPYAAQRD.

A signal peptide spans 1–21; that stretch reads MRRAPSLVLFFLVALCGRGNC. Topologically, residues 22-239 are extracellular; the sequence is RVANAEEKLM…RKPLFYTINL (218 aa). N-linked (GlcNAc...) asparagine glycosylation is found at Asn-36, Asn-93, Asn-138, and Asn-166. Cys-153 and Cys-167 form a disulfide bridge. A helical membrane pass occupies residues 240-255; sequence IIPCVLTTLLAILVFY. At 256-261 the chain is on the cytoplasmic side; sequence LPSDCG. Glu-262 lines the Na(+) pocket. Residues 262–277 traverse the membrane as a helical segment; that stretch reads EKMTLCISVLLALTFF. Topologically, residues 278–296 are extracellular; it reads LLLISKIVPPTSLDVPLIG. The helical transmembrane segment at 297–321 threads the bilayer; the sequence is KYLMFTMVLVTFSIVTSVCVLNVHH. Topologically, residues 322-454 are cytoplasmic; the sequence is RSPSTHTMAP…QSVVEDWKYV (133 aa). The disordered stretch occupies residues 357-377; sequence ARAFPPSKSCVTKPEATATST. Residues 455–478 form a helical membrane-spanning segment; the sequence is AMVVDRLFLWVFMFVCVLGTVGLF. The Extracellular portion of the chain corresponds to 479 to 498; it reads LPPLFQTHAASEGPYAAQRD.

The protein belongs to the ligand-gated ion channel (TC 1.A.9) family. Acetylcholine receptor (TC 1.A.9.1) subfamily. Beta-4/CHRNB4 sub-subfamily. In terms of assembly, neuronal AChR is composed of two different types of subunits: alpha and beta. CHRNB4/Beta-4 subunit can be combined to CHRNA2/alpha-2, CHRNA3/alpha-3 or CHRNA4/alpha-4, CHRNA5/alpha-5 and CHRNB3/beta-3 to give rise to functional receptors. Forms stoichiometries such as (CHRNA3)2:(CHRNB4)3 or (CHRNA3:CHRNB4)2:CHRNB3. Interacts with RIC3; which is required for proper folding and assembly. Interacts with LYPD6.

Its subcellular location is the synaptic cell membrane. It is found in the cell membrane. It catalyses the reaction Ca(2+)(in) = Ca(2+)(out). The enzyme catalyses K(+)(in) = K(+)(out). It carries out the reaction Na(+)(in) = Na(+)(out). Its activity is regulated as follows. Activated by a myriad of ligands such as acetylcholine, cytisine, nicotine, choline and epibatidine. The heteropentamer CHRNA3:CHRNB4 activity is blocked by the alpha-conotoxin ImI and AuIB. Component of neuronal acetylcholine receptors (nAChRs) that function as pentameric, ligand-gated cation channels with high calcium permeability among other activities. nAChRs are excitatory neurotrasnmitter receptors formed by a collection of nAChR subunits known to mediate synaptic transmission in the nervous system and the neuromuscular junction. Each nAchR subunit confers differential attributes to channel properties, including activation, deactivation and desensitization kinetics, pH sensitivity, cation permeability, and binding to allosteric modulators. CHRNB4 forms heteropentameric neuronal acetylcholine receptors with CHRNA2, CHRNA3 and CHRNA4, as well as CHRNA5 and CHRNB3 as accesory subunits. CHRNA3:CHRNB4 being predominant in neurons of the autonomic ganglia, it is known as ganglionic nicotinic receptor. CHRNA3:CHRNB4 or CHRNA3:CHRNA5:CHRNB4 play also an important role in the habenulo-interpeduncular tract, modulating the mesolimbic dopamine system and affecting reward circuits and addiction. Hypothalamic CHRNA3:CHRNB4 nAChR activation by nicotine leads to activation of POMC neurons and a decrease in food intake. The sequence is that of Neuronal acetylcholine receptor subunit beta-4 from Homo sapiens (Human).